The chain runs to 121 residues: uncharacterized protein (121 aa).

The next 2 membrane-spanning stretches (helical) occupy residues 16-36 (GFMV…GFAV) and 74-94 (LYIA…MKTI).

It localises to the cell membrane. This is an uncharacterized protein from Bacillus subtilis (strain 168).